Reading from the N-terminus, the 123-residue chain is Histone H2B.3 (123 aa).

The segment at 1–30 (MPPKVSGKAAKKAGKAQKNISKGDKKKNRK) is disordered. Residue serine 110 is glycosylated (O-linked (GlcNAc) serine). Lysine 118 is covalently cross-linked (Glycyl lysine isopeptide (Lys-Gly) (interchain with G-Cter in ubiquitin)).

Belongs to the histone H2B family. The nucleosome is a histone octamer containing two molecules each of H2A, H2B, H3 and H4 assembled in one H3-H4 heterotetramer and two H2A-H2B heterodimers. The octamer wraps approximately 147 bp of DNA. Post-translationally, monoubiquitination of Lys-118 gives a specific tag for epigenetic transcriptional activation and is also prerequisite for histone H3 'Lys-4' and 'Lys-79' methylation. GlcNAcylation at Ser-110 promotes monoubiquitination of Lys-118. It fluctuates in response to extracellular glucose, and associates with transcribed genes.

The protein localises to the nucleus. It is found in the chromosome. Its function is as follows. Core component of nucleosome. Nucleosomes wrap and compact DNA into chromatin, limiting DNA accessibility to the cellular machineries which require DNA as a template. Histones thereby play a central role in transcription regulation, DNA repair, DNA replication and chromosomal stability. DNA accessibility is regulated via a complex set of post-translational modifications of histones, also called histone code, and nucleosome remodeling. This Tigriopus californicus (Marine copepod) protein is Histone H2B.3.